The primary structure comprises 130 residues: WAP four-disulfide core domain protein 3 (130 aa).

The signal sequence occupies residues 1–16 (MKALLALGFLASWVAA). WAP domains are found at residues 17-61 (GEHA…RGDI) and 62-106 (EGGR…IPGL). Cystine bridges form between cysteine 25–cysteine 49, cysteine 32–cysteine 53, cysteine 36–cysteine 48, cysteine 42–cysteine 57, cysteine 69–cysteine 94, cysteine 77–cysteine 98, cysteine 81–cysteine 93, and cysteine 87–cysteine 102. The N-linked (GlcNAc...) asparagine glycan is linked to asparagine 116.

Its subcellular location is the secreted. The sequence is that of WAP four-disulfide core domain protein 3 (Wfdc3) from Mus musculus (Mouse).